We begin with the raw amino-acid sequence, 253 residues long: Imidazole glycerol phosphate synthase subunit HisF (253 aa).

Active-site residues include D11 and D130.

Belongs to the HisA/HisF family. In terms of assembly, heterodimer of HisH and HisF.

It is found in the cytoplasm. The enzyme catalyses 5-[(5-phospho-1-deoxy-D-ribulos-1-ylimino)methylamino]-1-(5-phospho-beta-D-ribosyl)imidazole-4-carboxamide + L-glutamine = D-erythro-1-(imidazol-4-yl)glycerol 3-phosphate + 5-amino-1-(5-phospho-beta-D-ribosyl)imidazole-4-carboxamide + L-glutamate + H(+). It participates in amino-acid biosynthesis; L-histidine biosynthesis; L-histidine from 5-phospho-alpha-D-ribose 1-diphosphate: step 5/9. Its function is as follows. IGPS catalyzes the conversion of PRFAR and glutamine to IGP, AICAR and glutamate. The HisF subunit catalyzes the cyclization activity that produces IGP and AICAR from PRFAR using the ammonia provided by the HisH subunit. The sequence is that of Imidazole glycerol phosphate synthase subunit HisF from Gluconobacter oxydans (strain 621H) (Gluconobacter suboxydans).